We begin with the raw amino-acid sequence, 135 residues long: ATP synthase epsilon chain (135 aa).

Belongs to the ATPase epsilon chain family. F-type ATPases have 2 components, CF(1) - the catalytic core - and CF(0) - the membrane proton channel. CF(1) has five subunits: alpha(3), beta(3), gamma(1), delta(1), epsilon(1). CF(0) has three main subunits: a, b and c.

The protein resides in the cell inner membrane. Produces ATP from ADP in the presence of a proton gradient across the membrane. The polypeptide is ATP synthase epsilon chain (Granulibacter bethesdensis (strain ATCC BAA-1260 / CGDNIH1)).